Consider the following 477-residue polypeptide: Kinesin-like protein KIN-1 (477 aa).

The Kinesin motor domain occupies 3–330 (NVTVCVRFRP…VRFGTRTKLI (328 aa)). 86–93 (GQTGAGKT) is an ATP binding site. The stretch at 402-451 (QDAASQEVSLLTQAVEELKETVEELTDENERLRGELELAQEAAAAAAAAR) forms a coiled coil.

The protein belongs to the TRAFAC class myosin-kinesin ATPase superfamily. Kinesin family. KIN-1 subfamily. In terms of tissue distribution, widely expressed. Expressed in young roots and leaves, in mature roots, culm, sheath and leaves, and in panicles at various developmental stages. Strongest expression is detected in panicles. In the panicle, expression is detected in anthers, glumme, lemma and palea. In the spikelet, expression is detected in both microsporocyte and the anther walls.

The protein localises to the cytoplasm. Functionally, kinesin-like motor protein that exhibits microtubule-stimulated ATPase activity. Plays an essential role in male meiotic chromosomal dynamics, male gametogenesis and anther dehiscence. May play a minor and nonessential role in regulating meiotic spindle formation. This Oryza sativa subsp. japonica (Rice) protein is Kinesin-like protein KIN-1.